The primary structure comprises 159 residues: SsrA-binding protein (159 aa).

Residues 134 to 159 (KEHDKRDTERDRDWSRDKERLMKHNA) form a disordered region.

Belongs to the SmpB family.

The protein localises to the cytoplasm. Functionally, required for rescue of stalled ribosomes mediated by trans-translation. Binds to transfer-messenger RNA (tmRNA), required for stable association of tmRNA with ribosomes. tmRNA and SmpB together mimic tRNA shape, replacing the anticodon stem-loop with SmpB. tmRNA is encoded by the ssrA gene; the 2 termini fold to resemble tRNA(Ala) and it encodes a 'tag peptide', a short internal open reading frame. During trans-translation Ala-aminoacylated tmRNA acts like a tRNA, entering the A-site of stalled ribosomes, displacing the stalled mRNA. The ribosome then switches to translate the ORF on the tmRNA; the nascent peptide is terminated with the 'tag peptide' encoded by the tmRNA and targeted for degradation. The ribosome is freed to recommence translation, which seems to be the essential function of trans-translation. This Marinomonas sp. (strain MWYL1) protein is SsrA-binding protein.